The following is a 320-amino-acid chain: tRNA pseudouridine synthase B (320 aa).

Residue aspartate 48 is the Nucleophile of the active site.

The protein belongs to the pseudouridine synthase TruB family. Type 1 subfamily.

The enzyme catalyses uridine(55) in tRNA = pseudouridine(55) in tRNA. Its function is as follows. Responsible for synthesis of pseudouridine from uracil-55 in the psi GC loop of transfer RNAs. The polypeptide is tRNA pseudouridine synthase B (Mycobacterium leprae (strain TN)).